Consider the following 1516-residue polypeptide: Lysine-specific demethylase 5C (1516 aa).

The region spanning 14 to 55 (CPVFEPSWAEFRDPLGYIAKIRPIAEKSGICKIRPPADWQPP) is the JmjN domain. The 105-residue stretch at 24 to 128 (FRDPLGYIAK…IVYPYEMYQS (105 aa)) folds into the ARID domain. Residues 142–151 (NEEKDKEYKP) show a composition bias toward basic and acidic residues. The disordered stretch occupies residues 142-186 (NEEKDKEYKPHSIPLRQSVQPSKFNSYGRRAKRLQPDPEPTEEDI). Positions 156 to 166 (LRQSVQPSKFN) are enriched in polar residues. Residues K164, K188, K203, and K233 each participate in a glycyl lysine isopeptide (Lys-Gly) (interchain with G-Cter in SUMO2) cross-link. The tract at residues 216–262 (LRKKDKEGPECPPTVVVKEESGGDVKVESTSPKTFLESKEELSHSPE) is disordered. The segment covering 232 to 242 (VKEESGGDVKV) has biased composition (basic and acidic residues). S246 is modified (phosphoserine). Residue K254 forms a Glycyl lysine isopeptide (Lys-Gly) (interchain with G-Cter in SUMO2) linkage. S260 and S276 each carry phosphoserine. The PHD-type 1 zinc finger occupies 283-333 (SYVCRMCSRGDEDDKLLLCDGCDDNYHIFCLLPPLPEIPKGVWRCPKCVMA). Residue Y399 participates in 2-oxoglutarate binding. The JmjC domain occupies 427–593 (EYATSGWNLN…AGRQCIEHYR (167 aa)). 2 residues coordinate Fe cation: H473 and E475. 2-oxoglutarate is bound by residues S481, N483, and K491. Residue H561 coordinates Fe cation. The segment at 666-718 (CIKCKTTCFLSALACYDCPDGLVCLSHINDLCKCSSSRQYLRYRYTLDELPAM) adopts a C5HC2 zinc-finger fold. S852 and S856 each carry phosphoserine. K1086 participates in a covalent cross-link: Glycyl lysine isopeptide (Lys-Gly) (interchain with G-Cter in SUMO2). A PHD-type 2 zinc finger spans residues 1144–1209 (TSICVCGQVP…KFLCPLCMRS (66 aa)). The tract at residues 1274–1305 (LQAEPRPEEPPTYPSTPAFDPLREGSGKDMPK) is disordered. Basic and acidic residues predominate over residues 1294–1304 (PLREGSGKDMP). Position 1318 is a phosphoserine (S1318). The segment at 1400–1516 (ERHGSRARGR…CPQQPPQQQL (117 aa)) is disordered. The segment covering 1404-1419 (SRARGRALERRRRRKV) has biased composition (basic residues). Residues 1420-1437 (DRGGEGDDPAREELEPKR) show a composition bias toward basic and acidic residues. The span at 1444-1459 (EAEEAHEEEELEEETG) shows a compositional bias: acidic residues. Composition is skewed to polar residues over residues 1471–1481 (GSPSTQENQNG) and 1489–1500 (SSGSSVPFSTLT).

The protein belongs to the JARID1 histone demethylase family. In terms of assembly, part of two distinct complexes, one containing E2F6, and the other containing REST. Interacts with ZMYND8. Fe(2+) is required as a cofactor.

It localises to the nucleus. The catalysed reaction is N(6),N(6),N(6)-trimethyl-L-lysyl(4)-[histone H3] + 3 2-oxoglutarate + 3 O2 = L-lysyl(4)-[histone H3] + 3 formaldehyde + 3 succinate + 3 CO2. Histone demethylase that specifically demethylates 'Lys-4' of histone H3, thereby playing a central role in histone code. Does not demethylate histone H3 'Lys-9', H3 'Lys-27', H3 'Lys-36', H3 'Lys-79' or H4 'Lys-20'. Demethylates trimethylated and dimethylated but not monomethylated H3 'Lys-4'. Participates in transcriptional repression of neuronal genes by recruiting histone deacetylases and REST at neuron-restrictive silencer elements. The polypeptide is Lysine-specific demethylase 5C (KDM5C) (Sus scrofa (Pig)).